We begin with the raw amino-acid sequence, 256 residues long: Pyridoxine 5'-phosphate synthase (256 aa).

Residue asparagine 10 coordinates 3-amino-2-oxopropyl phosphate. Residue 12 to 13 (DH) coordinates 1-deoxy-D-xylulose 5-phosphate. A 3-amino-2-oxopropyl phosphate-binding site is contributed by arginine 21. Histidine 46 (proton acceptor) is an active-site residue. Residues arginine 48 and histidine 53 each contribute to the 1-deoxy-D-xylulose 5-phosphate site. The active-site Proton acceptor is the glutamate 73. Residue threonine 103 participates in 1-deoxy-D-xylulose 5-phosphate binding. Residue histidine 193 is the Proton donor of the active site. Residues glycine 194 and 215 to 216 (GH) each bind 3-amino-2-oxopropyl phosphate.

It belongs to the PNP synthase family. As to quaternary structure, homooctamer; tetramer of dimers.

It is found in the cytoplasm. The enzyme catalyses 3-amino-2-oxopropyl phosphate + 1-deoxy-D-xylulose 5-phosphate = pyridoxine 5'-phosphate + phosphate + 2 H2O + H(+). Its pathway is cofactor biosynthesis; pyridoxine 5'-phosphate biosynthesis; pyridoxine 5'-phosphate from D-erythrose 4-phosphate: step 5/5. Its function is as follows. Catalyzes the complicated ring closure reaction between the two acyclic compounds 1-deoxy-D-xylulose-5-phosphate (DXP) and 3-amino-2-oxopropyl phosphate (1-amino-acetone-3-phosphate or AAP) to form pyridoxine 5'-phosphate (PNP) and inorganic phosphate. The sequence is that of Pyridoxine 5'-phosphate synthase from Zymomonas mobilis subsp. mobilis (strain ATCC 31821 / ZM4 / CP4).